We begin with the raw amino-acid sequence, 1254 residues long: Structural polyprotein (1254 aa).

Residues 1–33 (MFPYQPMYPMQPMPFRNPFAAPRRPWFPRTDPF) are necessary for nucleocapsid assembly and virus assembly. The interval 33–68 (FLAMQVQELARSMANLTFKQRRDVPPEGPPAKKKKK) is host transcription inhibition. Positions 41 to 48 (LARSMANL) match the Supraphysiological nuclear export signal motif. Residues 48–119 (LTFKQRRDVP…KPGKRQRMVM (72 aa)) are disordered. A Nuclear localization signal motif is present at residues 64–68 (KKKKK). 2 stretches are compositionally biased toward basic residues: residues 79-93 (NGKK…KKKT) and 102-117 (GGKK…RQRM). The tract at residues 91-126 (KKTGPPPQKTNGGKKKVNKKPGKRQRMVMKLESDKT) is binding to the viral RNA. Threonine 93 is modified (phosphothreonine). Residues 111 to 125 (PGKRQRMVMKLESDK) are ribosome-binding. Serine 123 is subject to Phosphoserine. Residues 125 to 274 (KTFPIMLDGR…KYTPENSEQW (150 aa)) form the Peptidase S3 domain. The residue at position 126 (threonine 126) is a Phosphothreonine. Histidine 151 (charge relay system) is an active-site residue. Positions 167-172 (KKASKY) are interaction with spike glycoprotein E2. Residues aspartate 173 and serine 225 each act as charge relay system in the active site. Positions 259–263 (EKGVT) are interaction with spike glycoprotein E2. The functions as an uncleaved signal peptide for the precursor of protein E3/E2 stretch occupies residues 275-286 (SLVTTMCLLANV). Over 275–700 (SLVTTMCLLA…HYYHRYPMST (426 aa)) the chain is Extracellular. 7 disulfides stabilise this stretch: cysteine 281/cysteine 290, cysteine 352/cysteine 456, cysteine 355/cysteine 360, cysteine 423/cysteine 437, cysteine 484/cysteine 599, cysteine 533/cysteine 559, and cysteine 535/cysteine 553. N-linked (GlcNAc...) asparagine; by host glycosylation occurs at asparagine 285. The N-linked (GlcNAc...) asparagine; by host glycan is linked to asparagine 651. Residues 701-721 (ILGLSICAAIVTTSIAASVWL) traverse the membrane as a helical segment. At 722 to 756 (FCKSRISCLTPYRLTPNARMPLCLAVLCCARTARA) the chain is on the cytoplasmic side. The interaction with the capsid protein stretch occupies residues 724–728 (KSRIS). 3 S-palmitoyl cysteine; by host lipidation sites follow: cysteine 729, cysteine 749, and cysteine 750. Positions 729 to 749 (CLTPYRLTPNARMPLCLAVLC) are transient transmembrane before p62-6K protein processing. Cysteine 729 and cysteine 750 are oxidised to a cystine. Topologically, residues 757-771 (ETTWESLDHLWNHNQ) are extracellular. Helical transmembrane passes span 772 to 790 (QMFW…VATR) and 791 to 811 (LLKC…VGAG). The Extracellular segment spans residues 812 to 1224 (AYEHATTMPN…SKTAWTWLTS (413 aa)). 4 disulfide bridges follow: cysteine 861–cysteine 926, cysteine 874–cysteine 906, cysteine 875–cysteine 908, and cysteine 880–cysteine 890. The E1 fusion peptide loop stretch occupies residues 896 to 913 (VYPFMWGGAYCFCDTENT). Asparagine 946 and asparagine 1082 each carry an N-linked (GlcNAc...) asparagine; by host glycan. Disulfide bonds link cysteine 1071/cysteine 1083, cysteine 1113/cysteine 1188, cysteine 1118/cysteine 1192, and cysteine 1140/cysteine 1182. A helical transmembrane segment spans residues 1225–1245 (LLGGSAIIIIIGLVLATIVAM). Over 1246–1254 (YVLTNQKHN) the chain is Cytoplasmic.

Homodimer. Homomultimer. Interacts with host karyopherin KPNA4; this interaction allows the nuclear import of the viral capsid protein. Interacts with spike glycoprotein E2. Interacts with host IRAK1; the interaction leads to inhibition of IRAK1-dependent signaling. Part of a tetrameric complex composed of host CRM1, host importin alpha/beta dimer and the viral capsid; this complex blocks the receptor-mediated transport through the nuclear pore. Interacts with host phosphatase PPP1CA; this interaction dephosphorylates the capsid protein, which increases its ability to bind to the viral genome. As to quaternary structure, the precursor of protein E3/E2 and E1 form a heterodimer shortly after synthesis. In terms of assembly, interacts with spike glycoprotein E2. The precursor of protein E3/E2 and E1 form a heterodimer shortly after synthesis. Processing of the precursor of protein E3/E2 into E2 and E3 results in a heterodimer of the spike glycoproteins E2 and E1. Spike at virion surface are constituted of three E2-E1 heterodimers. After target cell attachment and endocytosis, E1 change conformation to form homotrimers. Interacts with 6K protein. Interacts with host LDLRAD3; this interaction mediates viral entry to the host cell. Interacts with spike glycoprotein E1. Processing of the precursor of protein E3/E2 into E2 and E3 results in a heterodimer of the spike glycoproteins E2 and E1. Spike at virion surface are constituted of a trimer of E2-E1 heterodimers. Interacts with 6K protein. Interacts with host LDLRAD3; this interaction mediates viral entry to the host cell. As to quaternary structure, oligomer. Interacts with spike glycoprotein E1. Interacts with spike glycoprotein E2. Structural polyprotein: Specific enzymatic cleavages in vivo yield mature proteins. Capsid protein is auto-cleaved during polyprotein translation, unmasking a signal peptide at the N-terminus of the precursor of E3/E2. The remaining polyprotein is then targeted to the host endoplasmic reticulum, where host signal peptidase cleaves it into pE2, 6K and E1 proteins. pE2 is further processed to mature E3 and E2 by host furin in trans-Golgi vesicle. In terms of processing, phosphorylated on serine and threonine residues. Post-translationally, palmitoylated via thioester bonds. These palmitoylations may induce disruption of the C-terminus transmembrane. This would result in the reorientation of E2 C-terminus from lumenal to cytoplasmic side. N-glycosylated. In terms of processing, palmitoylated via thioester bonds.

The protein localises to the virion. The protein resides in the host cytoplasm. It localises to the host cell membrane. It is found in the host nucleus. Its subcellular location is the virion membrane. The protein localises to the host Golgi apparatus. The protein resides in the host trans-Golgi network. It localises to the host endoplasmic reticulum. The enzyme catalyses Autocatalytic release of the core protein from the N-terminus of the togavirus structural polyprotein by hydrolysis of a -Trp-|-Ser- bond.. Functionally, forms an icosahedral capsid with a T=4 symmetry composed of 240 copies of the capsid protein surrounded by a lipid membrane through which penetrate 80 spikes composed of trimers of E1-E2 heterodimers. The capsid protein binds to the viral RNA genome at a site adjacent to a ribosome binding site for viral genome translation following genome release. Possesses a protease activity that results in its autocatalytic cleavage from the nascent structural protein. Following its self-cleavage, the capsid protein transiently associates with ribosomes, and within several minutes the protein binds to viral RNA and rapidly assembles into icosahedric core particles. The resulting nucleocapsid eventually associates with the cytoplasmic domain of the spike glycoprotein E2 at the cell membrane, leading to budding and formation of mature virions. In case of infection, new virions attach to target cells and after clathrin-mediated endocytosis their membrane fuses with the host endosomal membrane. This leads to the release of the nucleocapsid into the cytoplasm, followed by an uncoating event necessary for the genomic RNA to become accessible. The uncoating might be triggered by the interaction of capsid proteins with ribosomes. Binding of ribosomes would release the genomic RNA since the same region is genomic RNA-binding and ribosome-binding. Specifically inhibits interleukin-1 receptor-associated kinase 1/IRAK1-dependent signaling during viral entry, representing a means by which the alphaviruses may evade innate immune detection and activation prior to viral gene expression. Inhibits host transcription. Forms a tetrameric complex with XPO1/CRM1 and the nuclear import receptor importin. This complex blocks the central channel of host nuclear pores thereby inhibiting the receptor-mediated nuclear transport and thus the host mRNA and rRNA transcription. The inhibition of transcription is linked to a cytopathic effect on the host cell. Provides the signal sequence for the translocation of the precursor of protein E3/E2 to the host endoplasmic reticulum. Furin-cleaved E3 remains associated with spike glycoprotein E1 and mediates pH protection of the latter during the transport via the secretory pathway. After virion release from the host cell, the assembly protein E3 is gradually released in the extracellular space. Its function is as follows. Plays a role in viral attachment to target host cell, by binding to the cell receptor LDLRAD3. Synthesized as a p62 precursor which is processed by furin at the cell membrane just before virion budding, giving rise to E2-E1 heterodimer. The p62-E1 heterodimer is stable, whereas E2-E1 is unstable and dissociate at low pH. p62 is processed at the last step, presumably to avoid E1 fusion activation before its final export to cell surface. E2 C-terminus contains a transitory transmembrane that would be disrupted by palmitoylation, resulting in reorientation of the C-terminal tail from lumenal to cytoplasmic side. This step is critical since E2 C-terminus is involved in budding by interacting with capsid proteins. This release of E2 C-terminus in cytoplasm occurs lately in protein export, and precludes premature assembly of particles at the endoplasmic reticulum membrane. In terms of biological role, acts as a viroporin that participates in virus glycoprotein processing and transport to the plasma membrane, cell permeabilization and budding of viral particles. Disrupts the calcium homeostasis of the cell, probably at the endoplasmic reticulum level. This leads to cytoplasmic calcium elevation. Because of its lipophilic properties, the 6K protein is postulated to influence the selection of lipids that interact with the transmembrane domains of the glycoproteins, which, in turn, affects the deformability of the bilayer required for the extreme curvature that occurs as budding proceeds. Present in low amount in virions, about 3% compared to viral glycoproteins. Functionally, class II viral fusion protein. Fusion activity is inactive as long as E1 is bound to E2 in mature virion. After virus attachment to cell receptor LDLRAD3 and endocytosis, acidification of the endosome induce dissociation of E1/E2 heterodimer and concomitant trimerization of the E1 subunits. This E1 trimer is fusion active, and promotes release of viral nucleocapsid in cytoplasm after endosome and viral membrane fusion. Efficient fusion requires the presence of cholesterol and sphingolipid in the target membrane. In Venezuelan equine encephalitis virus (strain Mena II) (VEEV), this protein is Structural polyprotein.